The primary structure comprises 434 residues: Serine hydroxymethyltransferase (434 aa).

Residues leucine 133 and glycine 137–leucine 139 contribute to the (6S)-5,6,7,8-tetrahydrofolate site. An N6-(pyridoxal phosphate)lysine modification is found at lysine 242.

The protein belongs to the SHMT family. Homodimer. Pyridoxal 5'-phosphate is required as a cofactor.

It is found in the cytoplasm. It catalyses the reaction (6R)-5,10-methylene-5,6,7,8-tetrahydrofolate + glycine + H2O = (6S)-5,6,7,8-tetrahydrofolate + L-serine. Its pathway is one-carbon metabolism; tetrahydrofolate interconversion. It functions in the pathway amino-acid biosynthesis; glycine biosynthesis; glycine from L-serine: step 1/1. In terms of biological role, catalyzes the reversible interconversion of serine and glycine with tetrahydrofolate (THF) serving as the one-carbon carrier. This reaction serves as the major source of one-carbon groups required for the biosynthesis of purines, thymidylate, methionine, and other important biomolecules. Also exhibits THF-independent aldolase activity toward beta-hydroxyamino acids, producing glycine and aldehydes, via a retro-aldol mechanism. The polypeptide is Serine hydroxymethyltransferase (Caulobacter sp. (strain K31)).